The primary structure comprises 250 residues: Leucyl/phenylalanyl-tRNA--protein transferase (250 aa).

This sequence belongs to the L/F-transferase family.

It localises to the cytoplasm. The enzyme catalyses N-terminal L-lysyl-[protein] + L-leucyl-tRNA(Leu) = N-terminal L-leucyl-L-lysyl-[protein] + tRNA(Leu) + H(+). It carries out the reaction N-terminal L-arginyl-[protein] + L-leucyl-tRNA(Leu) = N-terminal L-leucyl-L-arginyl-[protein] + tRNA(Leu) + H(+). The catalysed reaction is L-phenylalanyl-tRNA(Phe) + an N-terminal L-alpha-aminoacyl-[protein] = an N-terminal L-phenylalanyl-L-alpha-aminoacyl-[protein] + tRNA(Phe). In terms of biological role, functions in the N-end rule pathway of protein degradation where it conjugates Leu, Phe and, less efficiently, Met from aminoacyl-tRNAs to the N-termini of proteins containing an N-terminal arginine or lysine. This is Leucyl/phenylalanyl-tRNA--protein transferase from Bordetella avium (strain 197N).